A 169-amino-acid polypeptide reads, in one-letter code: Nicotinamide-nucleotide adenylyltransferase (169 aa).

It belongs to the archaeal NMN adenylyltransferase family.

It localises to the cytoplasm. The enzyme catalyses beta-nicotinamide D-ribonucleotide + ATP + H(+) = diphosphate + NAD(+). It functions in the pathway cofactor biosynthesis; NAD(+) biosynthesis; NAD(+) from nicotinamide D-ribonucleotide: step 1/1. The protein is Nicotinamide-nucleotide adenylyltransferase of Picrophilus torridus (strain ATCC 700027 / DSM 9790 / JCM 10055 / NBRC 100828 / KAW 2/3).